Here is a 346-residue protein sequence, read N- to C-terminus: Biotin synthase (346 aa).

Positions 38–256 (RQVQVSTLLS…IAVARIMMPT (219 aa)) constitute a Radical SAM core domain. Residues C53, C57, and C60 each contribute to the [4Fe-4S] cluster site. C97, C128, C188, and R260 together coordinate [2Fe-2S] cluster.

The protein belongs to the radical SAM superfamily. Biotin synthase family. In terms of assembly, homodimer. It depends on [4Fe-4S] cluster as a cofactor. [2Fe-2S] cluster is required as a cofactor.

It catalyses the reaction (4R,5S)-dethiobiotin + (sulfur carrier)-SH + 2 reduced [2Fe-2S]-[ferredoxin] + 2 S-adenosyl-L-methionine = (sulfur carrier)-H + biotin + 2 5'-deoxyadenosine + 2 L-methionine + 2 oxidized [2Fe-2S]-[ferredoxin]. The protein operates within cofactor biosynthesis; biotin biosynthesis; biotin from 7,8-diaminononanoate: step 2/2. Functionally, catalyzes the conversion of dethiobiotin (DTB) to biotin by the insertion of a sulfur atom into dethiobiotin via a radical-based mechanism. This Pseudescherichia vulneris (Escherichia vulneris) protein is Biotin synthase.